The sequence spans 369 residues: Chaperone protein DnaJ (369 aa).

One can recognise a J domain in the interval 4 to 69 (SYYEILEVEK…KKRALYDRYG (66 aa)). The segment at 130–207 (GCKKTIKVQY…CKGKTYILKD (78 aa)) adopts a CR-type zinc-finger fold. Zn(2+)-binding residues include Cys-143, Cys-146, Cys-159, Cys-162, Cys-181, Cys-184, Cys-195, and Cys-198. CXXCXGXG motif repeat units follow at residues 143–150 (CESCDGTG), 159–166 (CKQCNGQG), 181–188 (CGACQGKG), and 195–202 (CQACKGKT).

The protein belongs to the DnaJ family. In terms of assembly, homodimer. The cofactor is Zn(2+).

The protein localises to the cytoplasm. Participates actively in the response to hyperosmotic and heat shock by preventing the aggregation of stress-denatured proteins and by disaggregating proteins, also in an autonomous, DnaK-independent fashion. Unfolded proteins bind initially to DnaJ; upon interaction with the DnaJ-bound protein, DnaK hydrolyzes its bound ATP, resulting in the formation of a stable complex. GrpE releases ADP from DnaK; ATP binding to DnaK triggers the release of the substrate protein, thus completing the reaction cycle. Several rounds of ATP-dependent interactions between DnaJ, DnaK and GrpE are required for fully efficient folding. Also involved, together with DnaK and GrpE, in the DNA replication of plasmids through activation of initiation proteins. This is Chaperone protein DnaJ from Helicobacter pylori (strain ATCC 700392 / 26695) (Campylobacter pylori).